Here is a 120-residue protein sequence, read N- to C-terminus: NAD(P)H-quinone oxidoreductase subunit 3, chloroplastic (120 aa).

Helical transmembrane passes span 11 to 31 (VVFF…SKLI), 65 to 85 (FALI…WAIV), and 89 to 109 (LGIT…IGLV).

Belongs to the complex I subunit 3 family. NDH is composed of at least 16 different subunits, 5 of which are encoded in the nucleus.

Its subcellular location is the plastid. It is found in the chloroplast thylakoid membrane. It catalyses the reaction a plastoquinone + NADH + (n+1) H(+)(in) = a plastoquinol + NAD(+) + n H(+)(out). The catalysed reaction is a plastoquinone + NADPH + (n+1) H(+)(in) = a plastoquinol + NADP(+) + n H(+)(out). Functionally, NDH shuttles electrons from NAD(P)H:plastoquinone, via FMN and iron-sulfur (Fe-S) centers, to quinones in the photosynthetic chain and possibly in a chloroplast respiratory chain. The immediate electron acceptor for the enzyme in this species is believed to be plastoquinone. Couples the redox reaction to proton translocation, and thus conserves the redox energy in a proton gradient. This chain is NAD(P)H-quinone oxidoreductase subunit 3, chloroplastic, found in Mesostigma viride (Green alga).